Here is a 307-residue protein sequence, read N- to C-terminus: Zinc transporter ZIP9 (307 aa).

A helical transmembrane segment spans residues 4–24 (FISISLLSLAMLVGCYVAGII). N-linked (GlcNAc...) asparagine glycosylation is present at Asn29. A run of 5 helical transmembrane segments spans residues 35–55 (LKLVTVLGAGLLCGTALAVIV), 106–126 (AYIGVSLVLGFVFMLLVDQIG), 146–166 (ITTTLGLVVHAAADGVALGAA), 176–196 (LIVFVAIMLHKAPAAFGLVSF), and 210–230 (HLLVFALAAPVMSMVTYLGLS). N-linked (GlcNAc...) asparagine glycosylation is present at Asn241. 2 consecutive transmembrane segments (helical) span residues 244 to 264 (GVAMLFSAGTFLYVATVHVLP) and 286 to 306 (LEVAALVLGCLIPLILSVGHQ).

This sequence belongs to the ZIP transporter (TC 2.A.5) family. Highly expressed in pancreas, testis, and pituitary and moderately in the kidney, liver, uterus, heart, prostate, and brain, whereas expression is lower in the ovary and colon.

It is found in the golgi apparatus. Its subcellular location is the trans-Golgi network membrane. The protein localises to the cell membrane. It localises to the cytoplasm. The protein resides in the perinuclear region. It is found in the mitochondrion. Its subcellular location is the nucleus. The enzyme catalyses Zn(2+)(in) = Zn(2+)(out). Its function is as follows. Transports zinc ions across cell and organelle membranes into the cytoplasm and regulates intracellular zinc homeostasis. Participates in the zinc ions efflux out of the secretory compartments. Regulates intracellular zinc level, resulting in the enhancement of AKT1 and MAPK3/MAPK1 (Erk1/2) phosphorylation in response to the BCR activation. Also functions as a membrane androgen receptor that mediates, through a G protein, the non-classical androgen signaling pathway, characterized by the activation of MAPK3/MAPK1 (Erk1/2) and transcription factors CREB1 or ATF1. This pathway contributes to CLDN1 and CLDN5 expression and tight junction formation between adjacent Sertoli cells. Mediates androgen-induced vascular endothelial cell proliferation through activation of an inhibitory G protein leading to the AKT1 and MAPK3/MAPK1 (Erk1/2) activation which in turn modulate inhibition (phosphorylation) of GSK3B and CCND1 transcription. Moreover, has dual functions as a membrane-bound androgen receptor and as an androgen-dependent zinc transporter both of which are mediated through an inhibitory G protein (Gi) that mediates both MAP kinase and zinc signaling leading to the androgen-dependent apoptotic process. This is Zinc transporter ZIP9 from Homo sapiens (Human).